A 284-amino-acid polypeptide reads, in one-letter code: MFIISGRTMLKKAQQEGYAVPAFNIHNLETLQVVVETAAELRSPLIVAGTPGTFSYAGVGNIVAIAAELAKSWNHPLAVHLDHHEKLADIKMKVAAGVRSVMIDGSHFPFADNIALVKSVVDYCHRYDVSVEAELGRLGGQEDDLIVDGKDALYTHPEQAREFVEKTGIDSLAIAIGTAHGLYTAEPKLDFERLTEIRQRVDVPLVLHGASGLPTRDITRAISLGICKVNVATELKIAFSGALKNYLTQHAEASDPRHYMIPAKAAMKEVVRKVIADCGCDGKL.

Asp82 serves as the catalytic Proton donor. Residues His83 and His180 each contribute to the Zn(2+) site. Gly181 lines the dihydroxyacetone phosphate pocket. His208 serves as a coordination point for Zn(2+). Dihydroxyacetone phosphate is bound by residues 209–211 (GAS) and 230–233 (NVAT).

This sequence belongs to the class II fructose-bisphosphate aldolase family. TagBP aldolase GatY subfamily. Forms a complex with GatZ. Zn(2+) is required as a cofactor.

The catalysed reaction is D-tagatofuranose 1,6-bisphosphate = D-glyceraldehyde 3-phosphate + dihydroxyacetone phosphate. Its pathway is carbohydrate metabolism; D-tagatose 6-phosphate degradation; D-glyceraldehyde 3-phosphate and glycerone phosphate from D-tagatose 6-phosphate: step 2/2. In terms of biological role, catalytic subunit of the tagatose-1,6-bisphosphate aldolase GatYZ, which catalyzes the reversible aldol condensation of dihydroxyacetone phosphate (DHAP or glycerone-phosphate) with glyceraldehyde 3-phosphate (G3P) to produce tagatose 1,6-bisphosphate (TBP). Requires GatZ subunit for full activity and stability. Is involved in the catabolism of galactitol. This is D-tagatose-1,6-bisphosphate aldolase subunit GatY from Salmonella newport (strain SL254).